A 91-amino-acid chain; its full sequence is Elongation factor 1-beta (91 aa).

This sequence belongs to the EF-1-beta/EF-1-delta family.

Its function is as follows. Promotes the exchange of GDP for GTP in EF-1-alpha/GDP, thus allowing the regeneration of EF-1-alpha/GTP that could then be used to form the ternary complex EF-1-alpha/GTP/AAtRNA. This Pyrococcus furiosus (strain ATCC 43587 / DSM 3638 / JCM 8422 / Vc1) protein is Elongation factor 1-beta.